Consider the following 1547-residue polypeptide: Transposon Ty3-G Gag-Pol polyprotein (1547 aa).

Serine 2 is modified (N-acetylserine). The CCHC-type zinc-finger motif lies at arginine 265–alanine 282. The active-site For protease activity; shared with dimeric partner is aspartate 336. Residues leucine 620 to isoleucine 797 form the Reverse transcriptase domain. Mg(2+) contacts are provided by aspartate 686, aspartate 748, aspartate 749, aspartate 893, glutamate 936, and aspartate 961. The RNase H Ty3/gyspy-type domain occupies aspartate 893 to tyrosine 1011. An integrase-type zinc finger-like region spans residues histidine 1106–cysteine 1145. Residues leucine 1159–leucine 1324 form the Integrase catalytic domain. Aspartate 1175 and aspartate 1236 together coordinate Mg(2+).

The protease is a homodimer, whose active site consists of two apposed aspartic acid residues. Initially, virus-like particles (VLPs) are composed of the structural unprocessed proteins Gag and Gag-Pol, and also contain the host initiator methionine tRNA (tRNA(i)-Met) which serves as a primer for minus-strand DNA synthesis, and a dimer of genomic Ty RNA. Processing of the polyproteins occurs within the particle and proceeds by an ordered pathway, called maturation. First, the protease (PR) is released by autocatalytic cleavage of the Gag-Pol polyprotein, and this cleavage is a prerequisite for subsequent processing at the remaining sites to release the mature structural and catalytic proteins. Maturation takes place prior to the RT reaction and is required to produce transposition-competent VLPs.

It localises to the cytoplasm. The protein resides in the nucleus. It carries out the reaction DNA(n) + a 2'-deoxyribonucleoside 5'-triphosphate = DNA(n+1) + diphosphate. It catalyses the reaction Endonucleolytic cleavage to 5'-phosphomonoester.. Functionally, capsid protein (CA) is the structural component of the virus-like particle (VLP), forming the shell that encapsulates the genomic RNA-nucleocapsid complex. In terms of biological role, nucleocapsid protein p11 (NC) forms the nucleocore that coats the retro-elements dimeric RNA. Binds these RNAs through its zinc fingers. Promotes primer tRNA(i)-Met annealing to the multipartite primer-binding site (PBS), dimerization of Ty3 RNA and initiation of reverse transcription. Its function is as follows. The aspartyl protease (PR) mediates the proteolytic cleavages of the Gag and Gag-Pol polyproteins after assembly of the VLP. Reverse transcriptase/ribonuclease H (RT) is a multifunctional enzyme that catalyzes the conversion of the retro-elements RNA genome into dsDNA within the VLP. The enzyme displays a DNA polymerase activity that can copy either DNA or RNA templates, and a ribonuclease H (RNase H) activity that cleaves the RNA strand of RNA-DNA heteroduplexes during plus-strand synthesis and hydrolyzes RNA primers. The conversion leads to a linear dsDNA copy of the retrotransposon that includes long terminal repeats (LTRs) at both ends. Functionally, integrase (IN) targets the VLP to the nucleus, where a subparticle preintegration complex (PIC) containing at least integrase and the newly synthesized dsDNA copy of the retrotransposon must transit the nuclear membrane. Once in the nucleus, integrase performs the integration of the dsDNA into the host genome. This chain is Transposon Ty3-G Gag-Pol polyprotein (TY3B-G), found in Saccharomyces cerevisiae (strain ATCC 204508 / S288c) (Baker's yeast).